We begin with the raw amino-acid sequence, 328 residues long: UDP-glucose 4-epimerase (328 aa).

Residues 20–21, 41–46, 57–58, 77–81, serine 123, tyrosine 149, and lysine 153 contribute to the NAD(+) site; these read FV, VRHAVN, DI, and CAARA. The substrate site is built by serine 123 and tyrosine 149. The active-site Proton acceptor is the tyrosine 149. Residues 198–199 and 215–217 each bind substrate; these read GI and SIN.

The protein belongs to the NAD(P)-dependent epimerase/dehydratase family. Homodimer. The cofactor is NAD(+).

It catalyses the reaction UDP-alpha-D-glucose = UDP-alpha-D-galactose. Its pathway is bacterial outer membrane biogenesis; LPS O-antigen biosynthesis. Its function is as follows. Involved in the metabolism of galactose. Catalyzes the conversion of UDP-galactose (UDP-Gal) to UDP-glucose (UDP-Glc) through a mechanism involving the transient reduction of NAD. In Vibrio cholerae, this protein is UDP-glucose 4-epimerase (galE).